We begin with the raw amino-acid sequence, 79 residues long: Raniseptin-9 (79 aa).

The N-terminal stretch at 1 to 22 (MAFLKKSLFLVLFLGIVSLSIC) is a signal peptide. A propeptide spanning residues 23–49 (EEEKREGEEEEKQEEENEELSEEELRE) is cleaved from the precursor. The tract at residues 27-46 (REGEEEEKQEEENEELSEEE) is disordered. Over residues 30–44 (EEEEKQEEENEELSE) the composition is skewed to acidic residues.

It belongs to the frog skin active peptide (FSAP) family. Dermaseptin subfamily. Expressed by the skin glands.

Its subcellular location is the secreted. Its function is as follows. Has antibacterial activity. The chain is Raniseptin-9 from Boana raniceps (Chaco tree frog).